A 104-amino-acid chain; its full sequence is Pyrimidine/purine nucleoside phosphorylase (104 aa).

This sequence belongs to the nucleoside phosphorylase PpnP family.

It catalyses the reaction a purine D-ribonucleoside + phosphate = a purine nucleobase + alpha-D-ribose 1-phosphate. The catalysed reaction is adenosine + phosphate = alpha-D-ribose 1-phosphate + adenine. It carries out the reaction cytidine + phosphate = cytosine + alpha-D-ribose 1-phosphate. The enzyme catalyses guanosine + phosphate = alpha-D-ribose 1-phosphate + guanine. It catalyses the reaction inosine + phosphate = alpha-D-ribose 1-phosphate + hypoxanthine. The catalysed reaction is thymidine + phosphate = 2-deoxy-alpha-D-ribose 1-phosphate + thymine. It carries out the reaction uridine + phosphate = alpha-D-ribose 1-phosphate + uracil. The enzyme catalyses xanthosine + phosphate = alpha-D-ribose 1-phosphate + xanthine. Its function is as follows. Catalyzes the phosphorolysis of diverse nucleosides, yielding D-ribose 1-phosphate and the respective free bases. Can use uridine, adenosine, guanosine, cytidine, thymidine, inosine and xanthosine as substrates. Also catalyzes the reverse reactions. This is Pyrimidine/purine nucleoside phosphorylase from Herminiimonas arsenicoxydans.